The following is a 313-amino-acid chain: NADH-ubiquinone oxidoreductase chain 1 (313 aa).

The next 8 membrane-spanning stretches (helical) occupy residues Leu5 to Phe25, Phe75 to Phe95, Phe104 to Ala124, Leu151 to Met171, Leu175 to Leu195, Leu227 to Phe247, Asp251 to Val271, and Pro293 to Ile313.

Belongs to the complex I subunit 1 family.

The protein resides in the mitochondrion inner membrane. The enzyme catalyses a ubiquinone + NADH + 5 H(+)(in) = a ubiquinol + NAD(+) + 4 H(+)(out). Functionally, core subunit of the mitochondrial membrane respiratory chain NADH dehydrogenase (Complex I) that is believed to belong to the minimal assembly required for catalysis. Complex I functions in the transfer of electrons from NADH to the respiratory chain. The immediate electron acceptor for the enzyme is believed to be ubiquinone. This is NADH-ubiquinone oxidoreductase chain 1 (ND1) from Locusta migratoria (Migratory locust).